A 194-amino-acid polypeptide reads, in one-letter code: Orotate phosphoribosyltransferase (194 aa).

A 5-phospho-alpha-D-ribose 1-diphosphate-binding site is contributed by 116–124; it reads EDIVTTGLS. Residues T120 and R148 each coordinate orotate.

It belongs to the purine/pyrimidine phosphoribosyltransferase family. PyrE subfamily. As to quaternary structure, homodimer. Mg(2+) is required as a cofactor.

It carries out the reaction orotidine 5'-phosphate + diphosphate = orotate + 5-phospho-alpha-D-ribose 1-diphosphate. It participates in pyrimidine metabolism; UMP biosynthesis via de novo pathway; UMP from orotate: step 1/2. Catalyzes the transfer of a ribosyl phosphate group from 5-phosphoribose 1-diphosphate to orotate, leading to the formation of orotidine monophosphate (OMP). This chain is Orotate phosphoribosyltransferase, found in Phenylobacterium zucineum (strain HLK1).